The primary structure comprises 278 residues: 4-deoxy-L-threo-5-hexosulose-uronate ketol-isomerase (278 aa).

4 residues coordinate Zn(2+): histidine 196, histidine 198, glutamate 203, and histidine 245.

This sequence belongs to the KduI family. Zn(2+) serves as cofactor.

The catalysed reaction is 5-dehydro-4-deoxy-D-glucuronate = 3-deoxy-D-glycero-2,5-hexodiulosonate. Its pathway is glycan metabolism; pectin degradation; 2-dehydro-3-deoxy-D-gluconate from pectin: step 4/5. In terms of biological role, catalyzes the isomerization of 5-dehydro-4-deoxy-D-glucuronate to 3-deoxy-D-glycero-2,5-hexodiulosonate. This Salmonella choleraesuis (strain SC-B67) protein is 4-deoxy-L-threo-5-hexosulose-uronate ketol-isomerase.